Consider the following 1018-residue polypeptide: Unconventional myosin-Ig (1018 aa).

The residue at position 1 (M1) is an N-acetylmethionine. The 699-residue stretch at 9–707 (YGKPDFVLLD…TLVTLEQSRA (699 aa)) folds into the Myosin motor domain. ATP is bound at residue 102–109 (GESGAGKT). The tract at residues 584–606 (MVALVENLASKEPFYVRCIKPNE) is actin-binding. Positions 710–739 (IPIIVLLLQKAWRGTLARWRCRRLRAIYTI) constitute an IQ domain. Residues 824–1017 (GLRQDWGCRR…RGSFTLLWPS (194 aa)) form the TH1 domain.

It belongs to the TRAFAC class myosin-kinesin ATPase superfamily. Myosin family. As to quaternary structure, interacts with calmodulin; via its IQ motifs. In terms of tissue distribution, specifically expressed in hematopoietic cells.

The protein localises to the cell membrane. It localises to the cell projection. It is found in the phagocytic cup. Functionally, unconventional myosin required during immune response for detection of rare antigen-presenting cells by regulating T-cell migration. Unconventional myosins are actin-based motor molecules with ATPase activity and serve in intracellular movements. Acts as a regulator of T-cell migration by generating membrane tension, enforcing cell-intrinsic meandering search, thereby enhancing detection of rare antigens during lymph-node surveillance, enabling pathogen eradication. Also required in B-cells, where it regulates different membrane/cytoskeleton-dependent processes. Involved in Fc-gamma receptor (Fc-gamma-R) phagocytosis. In terms of biological role, constitutes the minor histocompatibility antigen HA-2. More generally, minor histocompatibility antigens (mHags) refer to immunogenic peptide which, when complexed with MHC, can generate an immune response after recognition by specific T-cells. The peptides are derived from polymorphic intracellular proteins, which are cleaved by normal pathways of antigen processing. The binding of these peptides to MHC class I or class II molecules and their expression on the cell surface can stimulate T-cell responses and thereby trigger graft rejection or graft-versus-host disease (GVHD) after hematopoietic stem cell transplantation from HLA-identical sibling donor. GVHD is a frequent complication after bone marrow transplantation (BMT), due to mismatch of minor histocompatibility antigen in HLA-matched sibling marrow transplants. HA-2 is restricted to MHC class I HLA-A*0201. This is Unconventional myosin-Ig (MYO1G) from Homo sapiens (Human).